The following is a 468-amino-acid chain: 6-phospho-beta-galactosidase 2 (468 aa).

D-galactose 6-phosphate contacts are provided by glutamine 19, histidine 116, asparagine 159, glutamate 160, and asparagine 297. The active-site Proton donor is glutamate 160. Glutamate 375 acts as the Nucleophile in catalysis. Residues serine 428, tryptophan 429, lysine 435, and tyrosine 437 each contribute to the D-galactose 6-phosphate site.

Belongs to the glycosyl hydrolase 1 family.

It carries out the reaction a 6-phospho-beta-D-galactoside + H2O = D-galactose 6-phosphate + an alcohol. It participates in carbohydrate metabolism; lactose degradation; D-galactose 6-phosphate and beta-D-glucose from lactose 6-phosphate: step 1/1. The protein is 6-phospho-beta-galactosidase 2 of Streptococcus pneumoniae (strain ATCC BAA-255 / R6).